Here is a 447-residue protein sequence, read N- to C-terminus: Na(+)-translocating NADH-quinone reductase subunit A (447 aa).

Belongs to the NqrA family. Composed of six subunits; NqrA, NqrB, NqrC, NqrD, NqrE and NqrF.

It catalyses the reaction a ubiquinone + n Na(+)(in) + NADH + H(+) = a ubiquinol + n Na(+)(out) + NAD(+). NQR complex catalyzes the reduction of ubiquinone-1 to ubiquinol by two successive reactions, coupled with the transport of Na(+) ions from the cytoplasm to the periplasm. NqrA to NqrE are probably involved in the second step, the conversion of ubisemiquinone to ubiquinol. In Yersinia pestis, this protein is Na(+)-translocating NADH-quinone reductase subunit A.